Consider the following 238-residue polypeptide: Ribonuclease PH (238 aa).

Residues arginine 86 and 124-126 (GTR) contribute to the phosphate site.

Belongs to the RNase PH family. In terms of assembly, homohexameric ring arranged as a trimer of dimers.

The catalysed reaction is tRNA(n+1) + phosphate = tRNA(n) + a ribonucleoside 5'-diphosphate. In terms of biological role, phosphorolytic 3'-5' exoribonuclease that plays an important role in tRNA 3'-end maturation. Removes nucleotide residues following the 3'-CCA terminus of tRNAs; can also add nucleotides to the ends of RNA molecules by using nucleoside diphosphates as substrates, but this may not be physiologically important. Probably plays a role in initiation of 16S rRNA degradation (leading to ribosome degradation) during starvation. This chain is Ribonuclease PH, found in Vibrio cholerae serotype O1 (strain ATCC 39315 / El Tor Inaba N16961).